Reading from the N-terminus, the 74-residue chain is uncharacterized protein (74 aa).

This is an uncharacterized protein from Invertebrate iridescent virus 3 (IIV-3).